Reading from the N-terminus, the 247-residue chain is Aspartate/glutamate leucyltransferase (247 aa).

It belongs to the R-transferase family. Bpt subfamily.

It localises to the cytoplasm. It catalyses the reaction N-terminal L-glutamyl-[protein] + L-leucyl-tRNA(Leu) = N-terminal L-leucyl-L-glutamyl-[protein] + tRNA(Leu) + H(+). The enzyme catalyses N-terminal L-aspartyl-[protein] + L-leucyl-tRNA(Leu) = N-terminal L-leucyl-L-aspartyl-[protein] + tRNA(Leu) + H(+). In terms of biological role, functions in the N-end rule pathway of protein degradation where it conjugates Leu from its aminoacyl-tRNA to the N-termini of proteins containing an N-terminal aspartate or glutamate. The polypeptide is Aspartate/glutamate leucyltransferase (Chromohalobacter salexigens (strain ATCC BAA-138 / DSM 3043 / CIP 106854 / NCIMB 13768 / 1H11)).